The chain runs to 90 residues: Mitochondrial import inner membrane translocase subunit Tim8 A (90 aa).

The Twin CX3C motif signature appears at 36–59 (CWEKCMDKPGPKLDSRTEVCFVNC). Intrachain disulfides connect Cys36–Cys59 and Cys40–Cys55.

Belongs to the small Tim family. As to quaternary structure, heterohexamer; composed of 3 copies of TIMM8A and 3 copies of TIMM13, named soluble 70 kDa complex. Associates with the TIM22 complex, whose core is composed of TIMM22.

It is found in the mitochondrion inner membrane. In terms of biological role, mitochondrial intermembrane chaperone that participates in the import and insertion of some multi-pass transmembrane proteins into the mitochondrial inner membrane. Also required for the transfer of beta-barrel precursors from the TOM complex to the sorting and assembly machinery (SAM complex) of the outer membrane. Acts as a chaperone-like protein that protects the hydrophobic precursors from aggregation and guide them through the mitochondrial intermembrane space. The TIMM8-TIMM13 complex mediates the import of some proteins while the predominant TIMM9-TIMM10 70 kDa complex mediates the import of much more proteins. This chain is Mitochondrial import inner membrane translocase subunit Tim8 A (timm8a), found in Danio rerio (Zebrafish).